Reading from the N-terminus, the 142-residue chain is Large ribosomal subunit protein uL13 (142 aa).

Belongs to the universal ribosomal protein uL13 family. Part of the 50S ribosomal subunit.

Its function is as follows. This protein is one of the early assembly proteins of the 50S ribosomal subunit, although it is not seen to bind rRNA by itself. It is important during the early stages of 50S assembly. In Thioalkalivibrio sulfidiphilus (strain HL-EbGR7), this protein is Large ribosomal subunit protein uL13.